Here is a 210-residue protein sequence, read N- to C-terminus: Pyridoxine/pyridoxamine 5'-phosphate oxidase (210 aa).

Substrate is bound by residues 7–10 (RQSY) and lysine 65. FMN contacts are provided by residues 60 to 65 (RIVLIK), 75 to 76 (FT), arginine 81, lysine 82, and glutamine 104. The substrate site is built by tyrosine 122, arginine 126, and serine 130. FMN contacts are provided by residues 139-140 (QS) and tryptophan 182. Position 188 to 190 (188 to 190 (RLH)) interacts with substrate. Arginine 192 provides a ligand contact to FMN.

Belongs to the pyridoxamine 5'-phosphate oxidase family. Homodimer. FMN is required as a cofactor.

It catalyses the reaction pyridoxamine 5'-phosphate + O2 + H2O = pyridoxal 5'-phosphate + H2O2 + NH4(+). The enzyme catalyses pyridoxine 5'-phosphate + O2 = pyridoxal 5'-phosphate + H2O2. It functions in the pathway cofactor metabolism; pyridoxal 5'-phosphate salvage; pyridoxal 5'-phosphate from pyridoxamine 5'-phosphate: step 1/1. Its pathway is cofactor metabolism; pyridoxal 5'-phosphate salvage; pyridoxal 5'-phosphate from pyridoxine 5'-phosphate: step 1/1. In terms of biological role, catalyzes the oxidation of either pyridoxine 5'-phosphate (PNP) or pyridoxamine 5'-phosphate (PMP) into pyridoxal 5'-phosphate (PLP). This Bordetella avium (strain 197N) protein is Pyridoxine/pyridoxamine 5'-phosphate oxidase.